The following is a 540-amino-acid chain: Light-independent protochlorophyllide reductase subunit B (540 aa).

Position 36 (Asp36) interacts with [4Fe-4S] cluster. Asp287 serves as the catalytic Proton donor. 422–423 contacts substrate; that stretch reads GL.

Belongs to the ChlB/BchB/BchZ family. Protochlorophyllide reductase is composed of three subunits; BchL, BchN and BchB. Forms a heterotetramer of two BchB and two BchN subunits. [4Fe-4S] cluster serves as cofactor.

The enzyme catalyses chlorophyllide a + oxidized 2[4Fe-4S]-[ferredoxin] + 2 ADP + 2 phosphate = protochlorophyllide a + reduced 2[4Fe-4S]-[ferredoxin] + 2 ATP + 2 H2O. It functions in the pathway porphyrin-containing compound metabolism; bacteriochlorophyll biosynthesis (light-independent). Functionally, component of the dark-operative protochlorophyllide reductase (DPOR) that uses Mg-ATP and reduced ferredoxin to reduce ring D of protochlorophyllide (Pchlide) to form chlorophyllide a (Chlide). This reaction is light-independent. The NB-protein (BchN-BchB) is the catalytic component of the complex. The polypeptide is Light-independent protochlorophyllide reductase subunit B (Rhodopseudomonas palustris (strain TIE-1)).